The following is an 894-amino-acid chain: Pentatricopeptide repeat-containing protein At1g19720 (894 aa).

18 PPR repeats span residues Lys80–Phe110, Asp114–Arg144, Asn145–Pro179, Asp180–Ser214, Cys215–Arg245, Asp246–Pro280, Gly281–Ala315, Asp316–Pro350, Asn351–Asp385, Asp386–Lys416, Asp417–Pro451, Asn452–Gln486, Asn488–Pro522, Asn523–Ala557, Ile558–Lys588, Asp589–Pro623, Asn624–Pro659, and Ala660–Pro694. The type E motif stretch occupies residues Ile695–Arg770. A type E(+) motif region spans residues Asn771–Asn801. Residues Ser803–Trp894 are type DYW motif.

The protein belongs to the PPR family. PCMP-H subfamily.

The protein is Pentatricopeptide repeat-containing protein At1g19720 (DYW7) of Arabidopsis thaliana (Mouse-ear cress).